Reading from the N-terminus, the 173-residue chain is RNA pyrophosphohydrolase (173 aa).

In terms of domain architecture, Nudix hydrolase spans 6–149 (GFRANVGIIL…KRGVYRRALQ (144 aa)). The short motif at 38–59 (GGIDRGETPMDAMYRELWEEVG) is the Nudix box element.

This sequence belongs to the Nudix hydrolase family. RppH subfamily. A divalent metal cation serves as cofactor.

Its function is as follows. Accelerates the degradation of transcripts by removing pyrophosphate from the 5'-end of triphosphorylated RNA, leading to a more labile monophosphorylated state that can stimulate subsequent ribonuclease cleavage. In Psychrobacter arcticus (strain DSM 17307 / VKM B-2377 / 273-4), this protein is RNA pyrophosphohydrolase.